Consider the following 256-residue polypeptide: uncharacterized protein (256 aa).

2 disordered regions span residues 1 to 171 (MARG…QLKH) and 185 to 256 (NGQR…LYND). Residues 14–39 (KRRSKVQEEEEHVEGSEEEVEEPEQK) adopt a coiled-coil conformation. Acidic residues-rich tracts occupy residues 21 to 35 (EEEEHVEGSEEEVEE) and 64 to 92 (SDDDDEDDLSELDVVVEDDNPVETSDNDE). The span at 108-129 (NRGDHESHDDNSDNEEQGDRGN) shows a compositional bias: basic and acidic residues. Residues 192–205 (KRGGPPRGSFGQRG) show a composition bias toward gly residues. Residues 219-234 (RQGDTRDTRDTRDTRL) show a composition bias toward basic and acidic residues.

This is an uncharacterized protein from Acanthamoeba polyphaga (Amoeba).